Here is a 391-residue protein sequence, read N- to C-terminus: Multidrug resistance protein MdtL (391 aa).

12 helical membrane-spanning segments follow: residues 4–24 (FLIC…MYLV), 42–62 (IAFS…GKVA), 69–89 (PVAI…SLAE), 93–113 (LFLA…VVAF), 131–151 (LLNG…HLIM), 158–178 (SLFW…LFIL), 203–222 (FFLS…LTFV), 245–265 (ALTA…LGIF), 269–289 (TLMI…AVSP), 293–313 (VSLF…GVAM), 331–351 (LGIA…VVGI), and 356–376 (MLIG…MFVA).

Belongs to the major facilitator superfamily. DHA1 family. MdtL (TC 2.A.1.2.22) subfamily.

The protein resides in the cell inner membrane. In terms of biological role, confers resistance to chloramphenicol. The sequence is that of Multidrug resistance protein MdtL from Escherichia coli (strain SMS-3-5 / SECEC).